The sequence spans 193 residues: Cysteine and glycine-rich protein 1 (193 aa).

In terms of domain architecture, LIM zinc-binding 1 spans 10-61; that stretch reads CGVCQKTVYFAEEVQCEGNSFHKSCFLCMVCKKNLDSTTVAVHGEEIYCKSC. Residues 64-69 carry the Nuclear localization signal motif; the sequence is KKYGPK. The residue at position 81 (S81) is a Phosphoserine. Residue K84 is modified to N6-acetyllysine. A Glycyl lysine isopeptide (Lys-Gly) (interchain with G-Cter in SUMO2) cross-link involves residue K91. 4 positions are modified to N6-acetyllysine: K112, K131, K137, and K161. The LIM zinc-binding 2 domain occupies 119–170; the sequence is CPRCSQAVYAAEKVIGAGKSWHKACFRCAKCGKGLESTTLADKDGEIYCKGC. The residue at position 192 (S192) is a Phosphoserine.

As to quaternary structure, interacts with ASCC1; ASCC2 and TRIP4.

Its subcellular location is the nucleus. Its function is as follows. Could play a role in neuronal development. The chain is Cysteine and glycine-rich protein 1 (CSRP1) from Homo sapiens (Human).